The primary structure comprises 275 residues: 4-hydroxy-tetrahydrodipicolinate reductase (275 aa).

Residues 8-13, 100-102, and 126-129 each bind NAD(+); these read GATGRM, GTT, and SPNM. The Proton donor/acceptor role is filled by H160. H161 contacts (S)-2,3,4,5-tetrahydrodipicolinate. K164 functions as the Proton donor in the catalytic mechanism. 170 to 171 contacts (S)-2,3,4,5-tetrahydrodipicolinate; that stretch reads GT.

This sequence belongs to the DapB family.

Its subcellular location is the cytoplasm. The enzyme catalyses (S)-2,3,4,5-tetrahydrodipicolinate + NAD(+) + H2O = (2S,4S)-4-hydroxy-2,3,4,5-tetrahydrodipicolinate + NADH + H(+). The catalysed reaction is (S)-2,3,4,5-tetrahydrodipicolinate + NADP(+) + H2O = (2S,4S)-4-hydroxy-2,3,4,5-tetrahydrodipicolinate + NADPH + H(+). It functions in the pathway amino-acid biosynthesis; L-lysine biosynthesis via DAP pathway; (S)-tetrahydrodipicolinate from L-aspartate: step 4/4. Catalyzes the conversion of 4-hydroxy-tetrahydrodipicolinate (HTPA) to tetrahydrodipicolinate. The polypeptide is 4-hydroxy-tetrahydrodipicolinate reductase (Methanopyrus kandleri (strain AV19 / DSM 6324 / JCM 9639 / NBRC 100938)).